A 130-amino-acid polypeptide reads, in one-letter code: RxLR effector protein PITG_14783 (130 aa).

An N-terminal signal peptide occupies residues 1-20; the sequence is MRLPYVFAATMATLLVSSNA. Positions 27–58 are disordered; the sequence is AMLSSPNEQHQRQLRSHQTPVEDQEPDEERSL. The RxLR-dEER motif lies at 38–56; the sequence is RQLRSHQTPVEDQEPDEER.

The protein belongs to the RxLR effector family.

The protein localises to the secreted. It localises to the host nucleus. The protein resides in the host cytoplasm. In terms of biological role, effector that enhances P.infestans colonization of Nicotiana benthamiana leaves. The sequence is that of RxLR effector protein PITG_14783 from Phytophthora infestans (strain T30-4) (Potato late blight agent).